The following is a 170-amino-acid chain: Cilia- and flagella-associated protein 276 (170 aa).

Disordered stretches follow at residues 1 to 37 (MPLT…PTHL) and 151 to 170 (HTAA…FFST).

As to quaternary structure, microtubule inner protein component of sperm flagellar doublet microtubules. As to expression, expressed in trachea multiciliated cells.

The protein localises to the cytoplasm. The protein resides in the cytoskeleton. It localises to the cilium axoneme. It is found in the flagellum axoneme. In terms of biological role, microtubule inner protein (MIP) part of the dynein-decorated doublet microtubules (DMTs) in cilia axoneme, which is required for motile cilia beating. May play an important role for the maintenance of myelin-axon integrity. May affect intracellular Ca(2+) homeostasis. The protein is Cilia- and flagella-associated protein 276 of Bos taurus (Bovine).